The chain runs to 276 residues: NADPH-dependent 7-cyano-7-deazaguanine reductase (276 aa).

83–85 (IES) serves as a coordination point for substrate. An NADPH-binding site is contributed by 85 to 86 (SK). The active-site Thioimide intermediate is C184. D191 (proton donor) is an active-site residue. Substrate is bound at residue 223 to 224 (HE). NADPH is bound at residue 252-253 (RG).

Belongs to the GTP cyclohydrolase I family. QueF type 2 subfamily. In terms of assembly, homodimer.

It is found in the cytoplasm. The enzyme catalyses 7-aminomethyl-7-carbaguanine + 2 NADP(+) = 7-cyano-7-deazaguanine + 2 NADPH + 3 H(+). It functions in the pathway tRNA modification; tRNA-queuosine biosynthesis. Functionally, catalyzes the NADPH-dependent reduction of 7-cyano-7-deazaguanine (preQ0) to 7-aminomethyl-7-deazaguanine (preQ1). The protein is NADPH-dependent 7-cyano-7-deazaguanine reductase of Desulfotalea psychrophila (strain LSv54 / DSM 12343).